We begin with the raw amino-acid sequence, 226 residues long: Putative O-methyltransferase Mvan_4497 (226 aa).

S-adenosyl-L-methionine-binding positions include valine 53, glutamate 75, 77–78 (GT), serine 83, aspartate 101, and valine 102. Aspartate 149 serves as a coordination point for substrate.

Belongs to the class I-like SAM-binding methyltransferase superfamily. Cation-dependent O-methyltransferase family.

This Mycolicibacterium vanbaalenii (strain DSM 7251 / JCM 13017 / BCRC 16820 / KCTC 9966 / NRRL B-24157 / PYR-1) (Mycobacterium vanbaalenii) protein is Putative O-methyltransferase Mvan_4497.